We begin with the raw amino-acid sequence, 2645 residues long: Non-reducing polyketide synthase AC (2645 aa).

Positions 73-2366 (ALQNLNEWLK…TDIVHNAWPM (2294 aa)) are N-terminal acylcarrier protein transacylase domain (SAT). Catalysis depends on His260, which acts as the Proton donor/acceptor; for transacylase activity. A Ketosynthase family 3 (KS3) domain is found at 416–834 (DDKIAVIGMA…GSNSSLVVTE (419 aa)). Active-site for beta-ketoacyl synthase activity residues include Cys583, His718, and His757. The interval 943–1252 (CFGGQISTYI…HAVSITTDKS (310 aa)) is malonyl-CoA:ACP transacylase (MAT) domain. The segment at 1324-1457 (SKGFTSFAGY…GVCSFCSATD (134 aa)) is N-terminal hotdog fold. A PKS/mFAS DH domain is found at 1324 to 1637 (SKGFTSFAGY…YNKVPLPVMR (314 aa)). The segment at 1330 to 1641 (FAGYIDGNQR…PLPVMRGILG (312 aa)) is product template (PT) domain. His1359 functions as the Proton acceptor; for dehydratase activity in the catalytic mechanism. Residues 1487 to 1637 (NIMQGTANIY…YNKVPLPVMR (151 aa)) are C-terminal hotdog fold. Asp1542 serves as the catalytic Proton donor; for dehydratase activity. Residues 1684 to 1696 (NGTTGTENPQIKS) show a composition bias toward polar residues. Residues 1684–1716 (NGTTGTENPQIKSKTNKVKKVPTRKSGGSDLET) are disordered. Residues 1697 to 1706 (KTNKVKKVPT) are compositionally biased toward basic residues. A Carrier domain is found at 1711-1788 (GSDLETPAKT…SLVKYIREIR (78 aa)). An O-(pantetheine 4'-phosphoryl)serine modification is found at Ser1748. Positions 1794–1805 (QNVDDSESESEE) are enriched in acidic residues. A disordered region spans residues 1794–1816 (QNVDDSESESEELQQQATPIDSA). Tyr2009 functions as the For methyltransferase activity in the catalytic mechanism. The interval 2023 to 2197 (EVFVEKIGSS…SVGYGHVDWT (175 aa)) is methyltransferase (CMeT) domain. An NADPH-binding (R) domain region spans residues 2269–2573 (CVLITGATGS…NIIPFYDWVQ (305 aa)).

It participates in mycotoxin biosynthesis. Its function is as follows. Non-reducing polyketide synthase; part of the gene cluster that mediates the biosynthesis of the selective antifungal agent ascochitine, an o-quinone methide that plays a possible protective role against other microbial competitors in nature and is considered to be important for pathogenicity of legume-associated Didymella species. The pathway probably begins with the synthesis of a keto-aldehyde intermediate by the ascochitine non-reducing polyketide synthase pksAC from successive condensations of 4 malonyl-CoA units, presumably with a simple acetyl-CoA starter unit. Release of the keto-aldehyde intermediate is consistent with the presence of the C-terminal reductive release domain. The HR-PKS (orf7) probably makes a diketide starter unit which is passed to the non-reducing polyketide synthase pksAC for further extension, producing ascochital and ascochitine. The aldehyde dehydrogenase (orf1), the 2-oxoglutarate-dependent dioxygenase (orf3) and the dehydrogenase (orf9) are probably involved in subsequent oxidations of methyl groups to the carboxylic acid of the heterocyclic ring. The ascochitine gene cluster also includes a gene encoding a short peptide (orf2) that is often found in secondary metabolite gene clusters and which function has still to be determined. This Didymella fabae (Leaf and pod spot disease fungus) protein is Non-reducing polyketide synthase AC.